Here is a 98-residue protein sequence, read N- to C-terminus: Large ribosomal subunit protein uL23 (98 aa).

It belongs to the universal ribosomal protein uL23 family. As to quaternary structure, part of the 50S ribosomal subunit. Contacts protein L29, and trigger factor when it is bound to the ribosome.

Functionally, one of the early assembly proteins it binds 23S rRNA. One of the proteins that surrounds the polypeptide exit tunnel on the outside of the ribosome. Forms the main docking site for trigger factor binding to the ribosome. This chain is Large ribosomal subunit protein uL23, found in Herpetosiphon aurantiacus (strain ATCC 23779 / DSM 785 / 114-95).